Consider the following 1435-residue polypeptide: Neuropathy target esterase sws (1435 aa).

Residues 1 to 35 are Lumenal-facing; sequence MDVLELLRVSGSNMYYSTFLADAWCYYISNQITMT. The chain crosses the membrane as a helical span at residues 36–56; the sequence is MYLYCALGVLSMLFIGWFVYF. The Cytoplasmic segment spans residues 57–1435; that stretch reads KRLARLRLRH…NTNNETKNYL (1379 aa). 176-303 lines the a nucleoside 3',5'-cyclic phosphate pocket; the sequence is IFGHFEKPIF…IRVIQVIMIR (128 aa). Residues 361–372 are compositionally biased toward low complexity; that stretch reads AASGTAGSTHTA. Disordered stretches follow at residues 361 to 405 and 422 to 452; these read AASG…ELSG and NSYP…QPEV. Residues 435 to 449 show a composition bias toward polar residues; sequence GNLSTRRGSITQQEQ. Residue Ser-443 is modified to Phosphoserine. Residues 474–601 and 590–717 each bind a nucleoside 3',5'-cyclic phosphate; these read ELGL…VVRR and IVLD…LSHR. The PNPLA domain occupies 944 to 1110; the sequence is LVLGGGGARG…VNNLPGHLWR (167 aa). A GXGXXG motif is present at residues 948–953; that stretch reads GGGARG. Positions 975–979 match the GXSXG motif; the sequence is GVSIG. Ser-977 (nucleophile) is an active-site residue. The active-site Proton acceptor is Asp-1097. The DGA/G signature appears at 1097 to 1099; the sequence is DGG. Positions 1308 to 1435 are disordered; that stretch reads MDKATQSTPP…NTNNETKNYL (128 aa). The span at 1311 to 1322 shows a compositional bias: polar residues; it reads ATQSTPPLQSKA. Basic and acidic residues-rich tracts occupy residues 1330–1361 and 1393–1424; these read SKEE…RELS and MDKK…KENR. Positions 1425–1435 are enriched in polar residues; the sequence is SNTNNETKNYL.

This sequence belongs to the NTE family. Interacts with Pka-C3; interaction inhibits the catalytic function of Pka-C3 and the esterase activity of sws.

The protein localises to the endoplasmic reticulum membrane. The catalysed reaction is a 1-acyl-sn-glycero-3-phosphocholine + H2O = sn-glycerol 3-phosphocholine + a fatty acid + H(+). In terms of biological role, phospholipase B that deacylates intracellular phosphatidylcholine (PtdCho), generating glycerophosphocholine (GroPtdCho). This deacylation occurs at both sn-2 and sn-1 positions of PtdCho. Its specific chemical modification by certain organophosphorus (OP) compounds leads to distal axonopathy. Plays a role in the signaling mechanism between neurons and glia that regulates glia wrapping during development of the adult brain. Essential for membrane lipid homeostasis and cell survival in both neurons and glia of the adult brain. The chain is Neuropathy target esterase sws from Drosophila persimilis (Fruit fly).